The following is a 142-amino-acid chain: Phosphoribosyl-AMP cyclohydrolase (142 aa).

Aspartate 92 serves as a coordination point for Mg(2+). Residue cysteine 93 participates in Zn(2+) binding. Residues aspartate 94 and aspartate 96 each coordinate Mg(2+). The Zn(2+) site is built by cysteine 109 and cysteine 116.

It belongs to the PRA-CH family. In terms of assembly, homodimer. Mg(2+) is required as a cofactor. Requires Zn(2+) as cofactor.

The protein resides in the cytoplasm. The catalysed reaction is 1-(5-phospho-beta-D-ribosyl)-5'-AMP + H2O = 1-(5-phospho-beta-D-ribosyl)-5-[(5-phospho-beta-D-ribosylamino)methylideneamino]imidazole-4-carboxamide. The protein operates within amino-acid biosynthesis; L-histidine biosynthesis; L-histidine from 5-phospho-alpha-D-ribose 1-diphosphate: step 3/9. Its function is as follows. Catalyzes the hydrolysis of the adenine ring of phosphoribosyl-AMP. The polypeptide is Phosphoribosyl-AMP cyclohydrolase (Halorhodospira halophila (strain DSM 244 / SL1) (Ectothiorhodospira halophila (strain DSM 244 / SL1))).